The chain runs to 448 residues: Na(+)-translocating NADH-quinone reductase subunit A (448 aa).

Belongs to the NqrA family. Composed of six subunits; NqrA, NqrB, NqrC, NqrD, NqrE and NqrF.

It carries out the reaction a ubiquinone + n Na(+)(in) + NADH + H(+) = a ubiquinol + n Na(+)(out) + NAD(+). In terms of biological role, NQR complex catalyzes the reduction of ubiquinone-1 to ubiquinol by two successive reactions, coupled with the transport of Na(+) ions from the cytoplasm to the periplasm. NqrA to NqrE are probably involved in the second step, the conversion of ubisemiquinone to ubiquinol. The chain is Na(+)-translocating NADH-quinone reductase subunit A from Glaesserella parasuis serovar 5 (strain SH0165) (Haemophilus parasuis).